The following is a 429-amino-acid chain: MTQMEDAKKGVITDEMLYIANREGISPDKLRKLVAKGYTVIFRNKVHDWVKPVAVGSGVRVKVNANIGTSRDIINVEEEIEKAKVAVKYGADTIMDLSTGGDLDEIRRKIMKAVDVPIGTVPIYQAAEEMLAKGKAIIEMTEDDMWRAIEKHFKDGVDFATVHVGVTKEVVEKMKRIKRVVGMVSRGGTFLAAWILHWNQENPLYKDYDYLLELAKEYDVVLSLGDGLRPGGLPDAGDELQIAELYTLGRLVKRARKAGVQTMVEGPGHVPIDQIPAQIKLMKVATDNAPVYVLGPLVTDIFPGYDHIAGAIGGAIAALNGADFLCYVTPAEHLGLPNVEHVREGVIAAKLAAHAVNLLRFEDEYRKDYEMSLARGNLNWARQFEIAFDKDKFIEIRKERPTKTEACSMCGDLCAIKIIQEMLTKKQTS.

Substrate-binding positions include Asn-66, Met-95, Tyr-124, His-163, 185–187, 226–229, and Glu-265; these read SRG and DGLR. Zn(2+) is bound at residue His-269. Tyr-292 is a binding site for substrate. His-333 is a Zn(2+) binding site. Residues Cys-407, Cys-410, and Cys-414 each contribute to the [4Fe-4S] cluster site.

This sequence belongs to the ThiC family. The cofactor is [4Fe-4S] cluster.

The catalysed reaction is 5-amino-1-(5-phospho-beta-D-ribosyl)imidazole + S-adenosyl-L-methionine = 4-amino-2-methyl-5-(phosphooxymethyl)pyrimidine + CO + 5'-deoxyadenosine + formate + L-methionine + 3 H(+). It participates in cofactor biosynthesis; thiamine diphosphate biosynthesis. Its function is as follows. Catalyzes the synthesis of the hydroxymethylpyrimidine phosphate (HMP-P) moiety of thiamine from aminoimidazole ribotide (AIR) in a radical S-adenosyl-L-methionine (SAM)-dependent reaction. The polypeptide is Phosphomethylpyrimidine synthase (Pyrococcus abyssi (strain GE5 / Orsay)).